The sequence spans 364 residues: Histidinol-phosphate aminotransferase (364 aa).

Residue Lys-226 is modified to N6-(pyridoxal phosphate)lysine.

Belongs to the class-II pyridoxal-phosphate-dependent aminotransferase family. Histidinol-phosphate aminotransferase subfamily. In terms of assembly, homodimer. Pyridoxal 5'-phosphate serves as cofactor.

It catalyses the reaction L-histidinol phosphate + 2-oxoglutarate = 3-(imidazol-4-yl)-2-oxopropyl phosphate + L-glutamate. It participates in amino-acid biosynthesis; L-histidine biosynthesis; L-histidine from 5-phospho-alpha-D-ribose 1-diphosphate: step 7/9. This Campylobacter jejuni subsp. jejuni serotype O:23/36 (strain 81-176) protein is Histidinol-phosphate aminotransferase.